We begin with the raw amino-acid sequence, 730 residues long: 1,4-alpha-glucan branching enzyme GlgB (730 aa).

The active-site Nucleophile is the Asp405. Glu458 acts as the Proton donor in catalysis.

It belongs to the glycosyl hydrolase 13 family. GlgB subfamily. As to quaternary structure, monomer.

It catalyses the reaction Transfers a segment of a (1-&gt;4)-alpha-D-glucan chain to a primary hydroxy group in a similar glucan chain.. It participates in glycan biosynthesis; glycogen biosynthesis. In terms of biological role, catalyzes the formation of the alpha-1,6-glucosidic linkages in glycogen by scission of a 1,4-alpha-linked oligosaccharide from growing alpha-1,4-glucan chains and the subsequent attachment of the oligosaccharide to the alpha-1,6 position. This is 1,4-alpha-glucan branching enzyme GlgB from Haemophilus influenzae (strain 86-028NP).